A 353-amino-acid chain; its full sequence is Quinolinate synthase (353 aa).

Iminosuccinate-binding residues include H47 and S68. Residue C113 participates in [4Fe-4S] cluster binding. Iminosuccinate contacts are provided by residues Y139–N141 and S156. [4Fe-4S] cluster is bound at residue C200. Iminosuccinate-binding positions include H226–E228 and T243. Position 297 (C297) interacts with [4Fe-4S] cluster.

Belongs to the quinolinate synthase family. Type 1 subfamily. It depends on [4Fe-4S] cluster as a cofactor.

It localises to the cytoplasm. The enzyme catalyses iminosuccinate + dihydroxyacetone phosphate = quinolinate + phosphate + 2 H2O + H(+). Its pathway is cofactor biosynthesis; NAD(+) biosynthesis; quinolinate from iminoaspartate: step 1/1. Functionally, catalyzes the condensation of iminoaspartate with dihydroxyacetone phosphate to form quinolinate. The protein is Quinolinate synthase of Erwinia tasmaniensis (strain DSM 17950 / CFBP 7177 / CIP 109463 / NCPPB 4357 / Et1/99).